A 368-amino-acid chain; its full sequence is Quinolinate synthase (368 aa).

The iminosuccinate site is built by H46 and S63. Position 110 (C110) interacts with [4Fe-4S] cluster. Iminosuccinate contacts are provided by residues 141–143 (YVN) and S162. Position 230 (C230) interacts with [4Fe-4S] cluster. Iminosuccinate contacts are provided by residues 256 to 258 (HPE) and T273. C320 is a [4Fe-4S] cluster binding site.

It belongs to the quinolinate synthase family. Type 3 subfamily. Requires [4Fe-4S] cluster as cofactor.

The protein localises to the cytoplasm. The catalysed reaction is iminosuccinate + dihydroxyacetone phosphate = quinolinate + phosphate + 2 H2O + H(+). The protein operates within cofactor biosynthesis; NAD(+) biosynthesis; quinolinate from iminoaspartate: step 1/1. Functionally, catalyzes the condensation of iminoaspartate with dihydroxyacetone phosphate to form quinolinate. This chain is Quinolinate synthase, found in Bacillus cereus (strain Q1).